We begin with the raw amino-acid sequence, 238 residues long: Sugar fermentation stimulation protein homolog (238 aa).

The protein belongs to the SfsA family.

This chain is Sugar fermentation stimulation protein homolog, found in Pseudomonas entomophila (strain L48).